Consider the following 247-residue polypeptide: Probable transcriptional regulatory protein Asuc_1803 (247 aa).

Belongs to the TACO1 family.

The protein localises to the cytoplasm. This Actinobacillus succinogenes (strain ATCC 55618 / DSM 22257 / CCUG 43843 / 130Z) protein is Probable transcriptional regulatory protein Asuc_1803.